The sequence spans 178 residues: Small ribosomal subunit protein uS4 (178 aa).

The S4 RNA-binding domain maps to 104–166 (RRLQTIVYRK…PNSPMASENH (63 aa)). Residues 158–178 (NSPMASENHPERTAAVSEENQ) are disordered.

The protein belongs to the universal ribosomal protein uS4 family. Part of the 30S ribosomal subunit. Contacts protein S5. The interaction surface between S4 and S5 is involved in control of translational fidelity.

Its function is as follows. One of the primary rRNA binding proteins, it binds directly to 16S rRNA where it nucleates assembly of the body of the 30S subunit. With S5 and S12 plays an important role in translational accuracy. The sequence is that of Small ribosomal subunit protein uS4 from Methanococcus maripaludis (strain C6 / ATCC BAA-1332).